The chain runs to 658 residues: Glycogen debranching enzyme (658 aa).

Catalysis depends on Asp335, which acts as the Nucleophile. The active-site Proton donor is the Glu370.

Belongs to the glycosyl hydrolase 13 family.

The catalysed reaction is Hydrolysis of (1-&gt;6)-alpha-D-glucosidic linkages to branches with degrees of polymerization of three or four glucose residues in limit dextrin.. It participates in glycan degradation; glycogen degradation. In terms of biological role, removes maltotriose and maltotetraose chains that are attached by 1,6-alpha-linkage to the limit dextrin main chain, generating a debranched limit dextrin. This chain is Glycogen debranching enzyme, found in Erwinia tasmaniensis (strain DSM 17950 / CFBP 7177 / CIP 109463 / NCPPB 4357 / Et1/99).